A 104-amino-acid chain; its full sequence is MQKIRRDDEIIVIAGKDKGKRGKVLKVLADDRLVVSGVNLIKRHSKPNPMLGVQGGIVEKEAPLHVSNVAIFNAETSKADRVGFKIEDGKKIRIFKSTQKPVDA.

This sequence belongs to the universal ribosomal protein uL24 family. As to quaternary structure, part of the 50S ribosomal subunit.

One of two assembly initiator proteins, it binds directly to the 5'-end of the 23S rRNA, where it nucleates assembly of the 50S subunit. Functionally, one of the proteins that surrounds the polypeptide exit tunnel on the outside of the subunit. This chain is Large ribosomal subunit protein uL24, found in Azotobacter vinelandii (strain DJ / ATCC BAA-1303).